Consider the following 953-residue polypeptide: Zinc finger CCCH domain-containing protein 18 (953 aa).

Methionine 1 carries the post-translational modification N-acetylmethionine. The span at 1-14 (MDVAESPERDPHSP) shows a compositional bias: basic and acidic residues. Disordered stretches follow at residues 1–222 (MDVA…RPRP) and 391–928 (QYTE…LSRR). Serine 6 carries the post-translational modification Phosphoserine. The span at 15–26 (EDEEQPQGLSDD) shows a compositional bias: acidic residues. Phosphoserine is present on residues serine 34, serine 46, serine 53, serine 59, serine 67, serine 74, serine 78, serine 83, and serine 95. Positions 60-72 (QEEEDNHSDEEDR) are enriched in acidic residues. Acidic residues predominate over residues 97–106 (CEEEGDEGEE). Residues 105 to 134 (EEDRTSDLRDEASSVTRELDEHELDYDEEV) are a coiled coil. Residues 107–124 (DRTSDLRDEASSVTRELD) are compositionally biased toward basic and acidic residues. Position 109 is a phosphothreonine (threonine 109). Phosphoserine occurs at positions 110 and 118. Composition is skewed to acidic residues over residues 125–136 (EHELDYDEEVPE) and 143–158 (QEDE…DEEK). Over residues 159 to 168 (GEGTPREEGK) the composition is skewed to basic and acidic residues. Threonine 162 is subject to Phosphothreonine. 2 positions are modified to phosphoserine: serine 173 and serine 179. Over residues 175 to 190 (GEKESLEAAKEKKKED) the composition is skewed to basic and acidic residues. A compositionally biased stretch (acidic residues) spans 191–207 (DDGEIDDGEIDDDDLEE). Residues 208 to 217 (GEVKDPSDRK) are compositionally biased toward basic and acidic residues. The segment at 219-245 (RPRPTCRFFMKGNCTWGMNCRFIHPGV) adopts a C3H1-type zinc-finger fold. A compositionally biased stretch (basic and acidic residues) spans 396 to 482 (EPYHNYRERE…EKEREKEKGK (87 aa)). Residues 399–464 (HNYRERERER…RERAKRDEKD (66 aa)) adopt a coiled-coil conformation. The residue at position 487 (serine 487) is a Phosphoserine. A Glycyl lysine isopeptide (Lys-Gly) (interchain with G-Cter in SUMO2) cross-link involves residue lysine 510. The segment covering 510–520 (KRADEWKDPWR) has biased composition (basic and acidic residues). 3 positions are modified to phosphoserine: serine 532, serine 534, and serine 536. The segment covering 545–606 (SASSASASNS…SRSRSFSSSP (62 aa)) has biased composition (low complexity). Glycyl lysine isopeptide (Lys-Gly) (interchain with G-Cter in SUMO2) cross-links involve residues lysine 622 and lysine 661. The segment covering 661–670 (KPGDPREARR) has biased composition (basic and acidic residues). Composition is skewed to low complexity over residues 692–725 (GSSY…SAHS) and 736–750 (ASPV…PAPA). The segment covering 760–774 (KKEDGVKEEKRKRDS) has biased composition (basic and acidic residues). Lysine 766 is covalently cross-linked (Glycyl lysine isopeptide (Lys-Gly) (interchain with G-Cter in SUMO2)). Positions 778–798 (PPKSAKPPAGGKSSQQPSTPQ) are enriched in low complexity. Lysine 814 carries the post-translational modification N6-acetyllysine. A Glycyl lysine isopeptide (Lys-Gly) (interchain with G-Cter in SUMO2) cross-link involves residue lysine 817. The segment covering 824 to 841 (AADKGSRKRYEPSDKDRQ) has biased composition (basic and acidic residues). Serine 842, serine 852, serine 868, serine 893, and serine 896 each carry phosphoserine. Low complexity predominate over residues 893-906 (SPQSKSSSKVTSVP). Lysine 908 participates in a covalent cross-link: Glycyl lysine isopeptide (Lys-Gly) (interchain with G-Cter in SUMO2). Polar residues predominate over residues 916–925 (STKSGKASTL). Residues 921–950 (KASTLSRREELLKQLKAVEDAIARKRAKIP) adopt a coiled-coil conformation.

Interacts with ZFC3H1 in a RNase-insensitive manner.

The protein localises to the nucleus. The polypeptide is Zinc finger CCCH domain-containing protein 18 (Homo sapiens (Human)).